The primary structure comprises 223 residues: Ribonuclease 3 (223 aa).

In terms of domain architecture, RNase III spans 4-127 (LENLQKLLGY…VMGAVYLEAG (124 aa)). Residue Glu-40 coordinates Mg(2+). Asp-44 is a catalytic residue. Mg(2+) is bound by residues Asp-113 and Glu-116. Glu-116 is a catalytic residue. One can recognise a DRBM domain in the interval 154–223 (DYKTALQEIT…AKIALEKMKK (70 aa)).

This sequence belongs to the ribonuclease III family. As to quaternary structure, homodimer. Mg(2+) serves as cofactor.

The protein resides in the cytoplasm. It carries out the reaction Endonucleolytic cleavage to 5'-phosphomonoester.. Its function is as follows. Digests double-stranded RNA. Involved in the processing of primary rRNA transcript to yield the immediate precursors to the large and small rRNAs (23S and 16S). Processes some mRNAs, and tRNAs when they are encoded in the rRNA operon. Processes pre-crRNA and tracrRNA of type II CRISPR loci if present in the organism. The sequence is that of Ribonuclease 3 from Campylobacter curvus (strain 525.92).